Consider the following 136-residue polypeptide: DUF35 domain-containing scaffold protein (136 aa).

Zn(2+) is bound by residues Cys-25, Cys-38, and Cys-41.

This sequence belongs to the scaffold protein DUF35 family. In terms of assembly, interacts with acetoacetyl-CoA thiolase and HMG-CoA synthase (HMGCS) that catalyzes the first and second step in the mevalonate pathway, respectively.

In terms of biological role, functions as a scaffold to connect the acetoacetyl-CoA thiolase and HMG-CoA synthase (HMGCS) dimers in the channeling thiolase/HMGCS complex, which allows for efficient coupling of the endergonic thiolase reaction with the exergonic HMGCS reaction. In Pyrococcus furiosus (strain ATCC 43587 / DSM 3638 / JCM 8422 / Vc1), this protein is DUF35 domain-containing scaffold protein.